The primary structure comprises 542 residues: MRVLVIFIPKSFPNKCLHFKKLGLWIIFQASIKEKSNHQKEILTEQQQQQIINNHINNSISSENLVIPLNNYEESPTQSNISSCYSSQSNLSSYSSTGSLSSYYGSNYYHGASSSSISSINSNIANSNSSSTGRDSTPTPTPTPIQTPSSTPSKKKRSWRIRTPSPKPKLESNNNHHHNHHNYYNNFSEISIELPPTPTYPQKPSFLSNSNQIPRPKSRHSHTNSADSYTSSYSSTYPSSTRSSQKQPPYYQQPINNKNNNNNNNINNFNFNGNNNNNNNNNNNNNNNNNNNNNNNNNNNNNNSNNMKISTSPNKLSNSNHSTNSNFSQCSSSHSLLDTNIGGINVNTQNLVSFTNETSNSGSTIIKPVALKSSSRSVFNSSNNQQYLFSSSTLSSSSSTKTNNNSTTTTTTTTAKTSSTSTNDYSSIKGKSLIDDDASCSISSFNAIEQQVLIPTVLSSSSSSHVMKRSNGSSNGGNSTIQSPSCNQISINKNNLVDIDDEDEDDEDDINGHWEKITIPSNMCRDQISIKNNFDESTKVIC.

Positions 125 to 138 are enriched in low complexity; that stretch reads ANSNSSSTGRDSTP. Disordered regions lie at residues 125-182, 194-333, 390-428, and 459-487; these read ANSN…NHHN, LPPT…CSSS, SSST…YSSI, and SSSS…PSCN. The segment covering 202 to 213 has biased composition (polar residues); it reads QKPSFLSNSNQI. 4 stretches are compositionally biased toward low complexity: residues 228-306, 314-333, 390-423, and 459-479; these read SYTS…NSNN, NKLS…CSSS, SSST…TSTN, and SSSS…GGNS.

This is an uncharacterized protein from Dictyostelium discoideum (Social amoeba).